Reading from the N-terminus, the 552-residue chain is TBCC domain-containing protein 1 (552 aa).

The 132-residue stretch at 304–435 folds into the C-CAP/cofactor C-like domain; that stretch reads PRLHRIVVMS…LEDHMARTGL (132 aa).

It belongs to the TBCC family. In terms of tissue distribution, expressed in brain and testis (at protein level).

The protein resides in the cytoplasm. Its subcellular location is the cytoskeleton. It localises to the microtubule organizing center. The protein localises to the centrosome. It is found in the spindle pole. Functionally, plays a role in the regulation of centrosome and Golgi apparatus positioning, with consequences on cell shape and cell migration. This is TBCC domain-containing protein 1 (Tbccd1) from Mus musculus (Mouse).